Consider the following 647-residue polypeptide: Acetyl-coenzyme A synthetase (647 aa).

CoA-binding positions include 190–193 and Thr310; that span reads RGGR. Residues 386 to 388, 410 to 415, Asp499, and Arg514 each bind ATP; these read GEP and DTWWQT. CoA is bound at residue Ser522. An ATP-binding site is contributed by Arg525. Mg(2+)-binding residues include Val536, His538, and Val541. CoA is bound at residue Arg583. N6-acetyllysine is present on Lys608.

The protein belongs to the ATP-dependent AMP-binding enzyme family. Mg(2+) serves as cofactor. In terms of processing, acetylated. Deacetylation by the SIR2-homolog deacetylase activates the enzyme.

It carries out the reaction acetate + ATP + CoA = acetyl-CoA + AMP + diphosphate. In terms of biological role, catalyzes the conversion of acetate into acetyl-CoA (AcCoA), an essential intermediate at the junction of anabolic and catabolic pathways. AcsA undergoes a two-step reaction. In the first half reaction, AcsA combines acetate with ATP to form acetyl-adenylate (AcAMP) intermediate. In the second half reaction, it can then transfer the acetyl group from AcAMP to the sulfhydryl group of CoA, forming the product AcCoA. The sequence is that of Acetyl-coenzyme A synthetase from Xylella fastidiosa (strain 9a5c).